The following is a 359-amino-acid chain: MKKYLALALIAPLLISCSTTQKGDTYNEAWVKDTNGFDILMGQFAHNIENIWGFKEVVIAGPKDYVKYTDQYQTRSHINFDDGTITIETIAGTEPAAHLRRAIIKTLLMGDDPSSVDLYSDVDDITISKEPFLYGQVVDNTGQPIRWEGRASNFADYLLKNRLKSRSNGLRIIYSVTINMVPNHLDKRAHKYLGMVRQASRKYGVDESLILAIMQTESSFNPYAVSRSDALGLMQVVQHTAGKDVFRSQGKSGTPSRSFLFDPASNIDTGTAYLAMLNNVYLGGIDNPTSRRYAVITAYNGGAGSVLRVFSNDKIQAANIINTMTPGDVYQTLTTRHPSAESRRYLYKVNTAQKSYRRR.

The N-terminal stretch at 1–16 (MKKYLALALIAPLLIS) is a signal peptide. A lipid anchor (N-palmitoyl cysteine) is attached at Cys17. Residue Cys17 is the site of S-diacylglycerol cysteine attachment.

The protein belongs to the transglycosylase Slt family.

Its subcellular location is the cell outer membrane. It carries out the reaction Exolytic cleavage of the (1-&gt;4)-beta-glycosidic linkage between N-acetylmuramic acid (MurNAc) and N-acetylglucosamine (GlcNAc) residues in peptidoglycan, from either the reducing or the non-reducing ends of the peptidoglycan chains, with concomitant formation of a 1,6-anhydrobond in the MurNAc residue.. Functionally, murein-degrading enzyme. May play a role in recycling of muropeptides during cell elongation and/or cell division. This Shigella dysenteriae serotype 1 (strain Sd197) protein is Membrane-bound lytic murein transglycosylase C.